The sequence spans 137 residues: Aspartate 1-decarboxylase (137 aa).

S25 functions as the Schiff-base intermediate with substrate; via pyruvic acid in the catalytic mechanism. S25 bears the Pyruvic acid (Ser) mark. T57 is a substrate binding site. Y58 serves as the catalytic Proton donor. Residue 73–75 coordinates substrate; that stretch reads GAA.

The protein belongs to the PanD family. In terms of assembly, heterooctamer of four alpha and four beta subunits. Pyruvate serves as cofactor. Is synthesized initially as an inactive proenzyme, which is activated by self-cleavage at a specific serine bond to produce a beta-subunit with a hydroxyl group at its C-terminus and an alpha-subunit with a pyruvoyl group at its N-terminus.

It is found in the cytoplasm. The enzyme catalyses L-aspartate + H(+) = beta-alanine + CO2. Its pathway is cofactor biosynthesis; (R)-pantothenate biosynthesis; beta-alanine from L-aspartate: step 1/1. In terms of biological role, catalyzes the pyruvoyl-dependent decarboxylation of aspartate to produce beta-alanine. This chain is Aspartate 1-decarboxylase, found in Thermobifida fusca (strain YX).